The following is a 127-amino-acid chain: Small ribosomal subunit protein uS13 (127 aa).

Residues 96–118 show a composition bias toward basic residues; sequence LPVRGQRTHTNARTRKGPKRGIV. Residues 96-127 form a disordered region; sequence LPVRGQRTHTNARTRKGPKRGIVRAKPAAPAR.

This sequence belongs to the universal ribosomal protein uS13 family. Part of the 30S ribosomal subunit. Forms a loose heterodimer with protein S19. Forms two bridges to the 50S subunit in the 70S ribosome.

Functionally, located at the top of the head of the 30S subunit, it contacts several helices of the 16S rRNA. In the 70S ribosome it contacts the 23S rRNA (bridge B1a) and protein L5 of the 50S subunit (bridge B1b), connecting the 2 subunits; these bridges are implicated in subunit movement. Contacts the tRNAs in the A and P-sites. The sequence is that of Small ribosomal subunit protein uS13 from Myxococcus xanthus (strain DK1622).